The sequence spans 292 residues: UTP--glucose-1-phosphate uridylyltransferase (292 aa).

It belongs to the UDPGP type 2 family.

The catalysed reaction is alpha-D-glucose 1-phosphate + UTP + H(+) = UDP-alpha-D-glucose + diphosphate. May play a role in stationary phase survival. In Mycoplasma genitalium (strain ATCC 33530 / DSM 19775 / NCTC 10195 / G37) (Mycoplasmoides genitalium), this protein is UTP--glucose-1-phosphate uridylyltransferase (galU).